The sequence spans 251 residues: Probable phosphatase Sama_2233 (251 aa).

The Zn(2+) site is built by histidine 8, histidine 10, histidine 16, histidine 41, glutamate 74, histidine 102, histidine 132, aspartate 193, and histidine 195.

This sequence belongs to the PHP family. Zn(2+) is required as a cofactor.

This chain is Probable phosphatase Sama_2233, found in Shewanella amazonensis (strain ATCC BAA-1098 / SB2B).